A 351-amino-acid polypeptide reads, in one-letter code: Dihydroorotate dehydrogenase (quinone) (351 aa).

Residues 67–71 (AGFDK) and T91 each bind FMN. K71 is a binding site for substrate. A substrate-binding site is contributed by 116-120 (NAMGF). N145 and N178 together coordinate FMN. Residue N178 coordinates substrate. S181 functions as the Nucleophile in the catalytic mechanism. Substrate is bound at residue N183. Residues K214 and T242 each contribute to the FMN site. Position 243–244 (243–244 (NT)) interacts with substrate. FMN-binding positions include G262, G291, and 312-313 (YS).

It belongs to the dihydroorotate dehydrogenase family. Type 2 subfamily. In terms of assembly, monomer. Requires FMN as cofactor.

It is found in the cell membrane. The enzyme catalyses (S)-dihydroorotate + a quinone = orotate + a quinol. Its pathway is pyrimidine metabolism; UMP biosynthesis via de novo pathway; orotate from (S)-dihydroorotate (quinone route): step 1/1. Its function is as follows. Catalyzes the conversion of dihydroorotate to orotate with quinone as electron acceptor. This chain is Dihydroorotate dehydrogenase (quinone) (pyrD), found in Helicobacter pylori (strain ATCC 700392 / 26695) (Campylobacter pylori).